Consider the following 323-residue polypeptide: rRNA 2'-O-methyltransferase fibrillarin (323 aa).

The interval 1-80 (MGFERGGRGG…AKGGAAGKKV (80 aa)) is disordered. Residues arginine 5, arginine 8, arginine 12, arginine 16, arginine 23, arginine 26, arginine 30, arginine 34, arginine 41, arginine 47, arginine 49, arginine 53, arginine 57, arginine 62, arginine 64, and arginine 68 each carry the asymmetric dimethylarginine modification. A compositionally biased stretch (gly residues) spans 8–76 (RGGARGGGRG…ARGGAKGGAA (69 aa)). Residues 174 to 175 (TS), 193 to 194 (EF), 218 to 219 (DA), and 238 to 241 (DVAQ) each bind S-adenosyl-L-methionine.

The protein belongs to the methyltransferase superfamily. Fibrillarin family. In terms of assembly, component of box C/D small nucleolar ribonucleoprotein (snoRNP) particles. Post-translationally, by homology to other fibrillarins, some or all of the N-terminal domain arginines are modified to asymmetric dimethylarginine (DMA).

It is found in the nucleus. Its subcellular location is the nucleolus. The catalysed reaction is L-glutaminyl-[histone H2A] + S-adenosyl-L-methionine = N(5)-methyl-L-glutaminyl-[histone H2A] + S-adenosyl-L-homocysteine + H(+). In terms of biological role, S-adenosyl-L-methionine-dependent methyltransferase that has the ability to methylate both RNAs and proteins. Involved in pre-rRNA processing. Utilizes the methyl donor S-adenosyl-L-methionine to catalyze the site-specific 2'-hydroxyl methylation of ribose moieties in pre-ribosomal RNA. Site specificity is provided by a guide RNA that base pairs with the substrate. Methylation occurs at a characteristic distance from the sequence involved in base pairing with the guide RNA. Also acts as a protein methyltransferase by mediating methylation of 'Gln-105' of histone H2A (H2AQ105me), a modification that impairs binding of the FACT complex and is specifically present at 35S ribosomal DNA locus. This Neurospora crassa (strain ATCC 24698 / 74-OR23-1A / CBS 708.71 / DSM 1257 / FGSC 987) protein is rRNA 2'-O-methyltransferase fibrillarin (nop-1).